The sequence spans 37 residues: uncharacterized protein (37 aa).

The disordered stretch occupies residues 1-37 (MGQVEKARQGQFARPHHSDSQRRVRAWSRIQRRARSF). Positions 23-37 (RVRAWSRIQRRARSF) are enriched in basic residues.

This is an uncharacterized protein from Bacillus phage phi105 (Bacteriophage phi-105).